The chain runs to 545 residues: CTP synthase (545 aa).

Residues 1-266 are amidoligase domain; sequence MKTNYIFVTG…DDYICKRFSL (266 aa). S14 serves as a coordination point for CTP. Residue S14 coordinates UTP. ATP contacts are provided by residues 15–20 and D72; that span reads SLGKGI. Mg(2+) is bound by residues D72 and E140. CTP-binding positions include 147–149, 187–192, and K223; these read DIE and KTKPTQ. UTP-binding positions include 187-192 and K223; that span reads KTKPTQ. 239 to 241 contacts ATP; it reads KDV. One can recognise a Glutamine amidotransferase type-1 domain in the interval 291–542; that stretch reads TIGMVGKYVE…VKAAFDYQKG (252 aa). G352 contributes to the L-glutamine binding site. C379 (nucleophile; for glutamine hydrolysis) is an active-site residue. L-glutamine-binding positions include 380–383, E403, and R470; that span reads LGMQ. Active-site residues include H515 and E517.

The protein belongs to the CTP synthase family. Homotetramer.

The enzyme catalyses UTP + L-glutamine + ATP + H2O = CTP + L-glutamate + ADP + phosphate + 2 H(+). It carries out the reaction L-glutamine + H2O = L-glutamate + NH4(+). It catalyses the reaction UTP + NH4(+) + ATP = CTP + ADP + phosphate + 2 H(+). It functions in the pathway pyrimidine metabolism; CTP biosynthesis via de novo pathway; CTP from UDP: step 2/2. Allosterically activated by GTP, when glutamine is the substrate; GTP has no effect on the reaction when ammonia is the substrate. The allosteric effector GTP functions by stabilizing the protein conformation that binds the tetrahedral intermediate(s) formed during glutamine hydrolysis. Inhibited by the product CTP, via allosteric rather than competitive inhibition. Its function is as follows. Catalyzes the ATP-dependent amination of UTP to CTP with either L-glutamine or ammonia as the source of nitrogen. Regulates intracellular CTP levels through interactions with the four ribonucleotide triphosphates. This is CTP synthase from Proteus mirabilis (strain HI4320).